The following is a 211-amino-acid chain: uncharacterized protein (211 aa).

The stretch at 105–143 (IEENEFDKVRKSSDKLINEIEKTKSSLREDVKTALSEVR) forms a coiled coil. Residues 191–211 (QWFTGFVGVVSSVVLIILFYF) form a helical membrane-spanning segment.

Belongs to the CCDC90 family.

Its subcellular location is the mitochondrion. The protein resides in the membrane. This is an uncharacterized protein from Schizosaccharomyces pombe (strain 972 / ATCC 24843) (Fission yeast).